Reading from the N-terminus, the 249-residue chain is DNA repair protein RecO (249 aa).

It belongs to the RecO family.

In terms of biological role, involved in DNA repair and RecF pathway recombination. The protein is DNA repair protein RecO of Lactobacillus delbrueckii subsp. bulgaricus (strain ATCC BAA-365 / Lb-18).